Reading from the N-terminus, the 165-residue chain is Large ribosomal subunit protein uL10 (165 aa).

It belongs to the universal ribosomal protein uL10 family. In terms of assembly, part of the ribosomal stalk of the 50S ribosomal subunit. The N-terminus interacts with L11 and the large rRNA to form the base of the stalk. The C-terminus forms an elongated spine to which L12 dimers bind in a sequential fashion forming a multimeric L10(L12)X complex.

In terms of biological role, forms part of the ribosomal stalk, playing a central role in the interaction of the ribosome with GTP-bound translation factors. This is Large ribosomal subunit protein uL10 from Paraburkholderia phymatum (strain DSM 17167 / CIP 108236 / LMG 21445 / STM815) (Burkholderia phymatum).